The following is a 281-amino-acid chain: Arylamine N-acetyltransferase / N-hydroxyarylamine O-acetyltransferase (281 aa).

Catalysis depends on C69, which acts as the Acyl-thioester intermediate. Residues H107 and D122 contribute to the active site.

It belongs to the arylamine N-acetyltransferase family. Monomer and homodimer.

Its subcellular location is the cytoplasm. The catalysed reaction is an arylamine + acetyl-CoA = an N-acetylarylamine + CoA. It catalyses the reaction an N-hydroxyarylamine + acetyl-CoA = an N-acetoxyarylamine + CoA. Inhibited by N-ethylmaleimide and iodoacetamide. Its function is as follows. Catalyzes both the acetyl-CoA-dependent N-acetylation of aromatic amines and the O-acetylation of N-hydroxyarylamines. In vitro, catalyzes the O-acetylation of N-hydroxy-Glu-P-1, and the N-acetylation of isoniazid and 2-aminofluorene. This is Arylamine N-acetyltransferase / N-hydroxyarylamine O-acetyltransferase (nhoA) from Salmonella typhimurium (strain LT2 / SGSC1412 / ATCC 700720).